The primary structure comprises 270 residues: Aliphatic sulfonates import ATP-binding protein SsuB (270 aa).

An ABC transporter domain is found at 17–238 (LASKGLRKTF…ARGSHRLAAL (222 aa)). ATP is bound at residue 49-56 (GRSGCGKS). Residues 248-270 (STPGTAPEPDPVAPLPTQLRWAH) form a disordered region.

The protein belongs to the ABC transporter superfamily. Aliphatic sulfonates importer (TC 3.A.1.17.2) family. In terms of assembly, the complex is composed of two ATP-binding proteins (SsuB), two transmembrane proteins (SsuC) and a solute-binding protein (SsuA).

It localises to the cell inner membrane. The enzyme catalyses ATP + H2O + aliphatic sulfonate-[sulfonate-binding protein]Side 1 = ADP + phosphate + aliphatic sulfonateSide 2 + [sulfonate-binding protein]Side 1.. Its function is as follows. Part of the ABC transporter complex SsuABC involved in aliphatic sulfonates import. Responsible for energy coupling to the transport system. This is Aliphatic sulfonates import ATP-binding protein SsuB from Pseudomonas putida (strain ATCC 47054 / DSM 6125 / CFBP 8728 / NCIMB 11950 / KT2440).